The chain runs to 186 residues: UPF0461 protein C5orf24 homolog (186 aa).

The span at 60-69 shows a compositional bias: polar residues; that stretch reads NETHLQTSTS. The interval 60–140 is disordered; the sequence is NETHLQTSTS…AAGYKVSPGR (81 aa). A compositionally biased stretch (basic residues) spans 78 to 92; that stretch reads LKKKKNLGRSGKRGR. Positions 94-107 are enriched in polar residues; that stretch reads SGTTKSAGYRTSTG.

The protein belongs to the UPF0461 family.

In Xenopus tropicalis (Western clawed frog), this protein is UPF0461 protein C5orf24 homolog.